The sequence spans 684 residues: Suppressor of presenilin protein 3 (684 aa).

5 consecutive C2H2-type zinc fingers follow at residues 21 to 43, 48 to 71, 123 to 145, 261 to 283, and 291 to 313; these read YKCH…LRRH, FDCE…LQSH, YKCP…ILSH, YLCR…FRHH, and WTCI…VKMH. Disordered stretches follow at residues 337–359, 419–440, and 469–501; these read DLNK…HSDM, KNNS…SKSD, and TSKF…DQFQ. C2H2-type zinc fingers lie at residues 590-612 and 618-641; these read RECT…RDKH and HTCP…FVDH. Residues 652-684 form a disordered region; the sequence is LPSSDSEDDNIPVPPDTPQRKKKAPKRGKRRGW. The segment covering 671–684 has biased composition (basic residues); the sequence is RKKKAPKRGKRRGW.

The protein resides in the nucleus. Its function is as follows. Probable transcriptional regulator, which participates in the transcriptional repression of the presenilin protein hop-1. In Caenorhabditis elegans, this protein is Suppressor of presenilin protein 3 (spr-3).